The primary structure comprises 260 residues: Carbonic anhydrase 2 (260 aa).

At S2 the chain carries N-acetylserine. At S2 the chain carries Phosphoserine. The 257-residue stretch at 3–259 folds into the Alpha-carbonic anhydrase domain; that stretch reads HHWGYGKHNG…LKGRQVKASF (257 aa). H64 serves as the catalytic Proton donor/acceptor. Residues H94, H96, and H119 each coordinate Zn(2+). S165 and S172 each carry phosphoserine. 198-199 contributes to the substrate binding site; sequence TT.

The protein belongs to the alpha-carbonic anhydrase family. Interacts with SLC4A4 and SLC26A6. Interaction with SLC4A7 regulates SLC4A7 transporter activity. Zn(2+) serves as cofactor.

The protein localises to the cytoplasm. Its subcellular location is the cell membrane. The catalysed reaction is hydrogencarbonate + H(+) = CO2 + H2O. It catalyses the reaction urea = cyanamide + H2O. With respect to regulation, inhibited by acetazolamide. Its function is as follows. Catalyzes the reversible hydration of carbon dioxide. Can also hydrate cyanamide to urea. Involved in the regulation of fluid secretion into the anterior chamber of the eye. Essential for bone resorption and osteoclast differentiation. Contributes to intracellular pH regulation in the duodenal upper villous epithelium during proton-coupled peptide absorption. Stimulates the chloride-bicarbonate exchange activity of SLC26A6. The sequence is that of Carbonic anhydrase 2 (CA2) from Oryctolagus cuniculus (Rabbit).